The following is a 122-amino-acid chain: Small ribosomal subunit protein uS13 (122 aa).

Positions 95–122 (GLPVRGQRTKTNSRTRKGRRKTVANKKK) are disordered. Over residues 101–122 (QRTKTNSRTRKGRRKTVANKKK) the composition is skewed to basic residues.

It belongs to the universal ribosomal protein uS13 family. In terms of assembly, part of the 30S ribosomal subunit. Forms a loose heterodimer with protein S19. Forms two bridges to the 50S subunit in the 70S ribosome.

Located at the top of the head of the 30S subunit, it contacts several helices of the 16S rRNA. In the 70S ribosome it contacts the 23S rRNA (bridge B1a) and protein L5 of the 50S subunit (bridge B1b), connecting the 2 subunits; these bridges are implicated in subunit movement. Contacts the tRNAs in the A and P-sites. The polypeptide is Small ribosomal subunit protein uS13 (Protochlamydia amoebophila (strain UWE25)).